A 350-amino-acid polypeptide reads, in one-letter code: MRVSEDTSTKEVFERVAADFLQLYKRCVLAQTREVRSSDRERCEELVRRNALARELCKLHQTLCFVYENDALYGIVLDALDLEGIYGRVEEGPGADDYQDRLVQELLRYFKDEFFTWCDKPLCARCGTAKKQAAVGHGKPTVEEARYRCTVVELFRCEDCGDVARFPRYNDPLKLLETRTGRCGEWCNLFMLILRSFGIEARYTWNREDHVWCEVYSNALKRWVHVDSCEKSFDEPHIYSVNWNKAMSYVIAFSNRSVKDVSRRYIVRNRLPRDQIDEDDLQFLTKYLTKLLRLQLPDEERYLLHCRDELEAIDLLGSKTAPMEIPPAAGAAGRQSGSADWKRQRGEDGR.

Cys123, Cys126, Cys157, and Cys160 together coordinate Zn(2+). Cys183 serves as the catalytic Nucleophile. Catalysis depends on residues His210 and Asp227. A substrate-binding site is contributed by Glu230. The tract at residues 324 to 350 (EIPPAAGAAGRQSGSADWKRQRGEDGR) is disordered. A compositionally biased stretch (basic and acidic residues) spans 340 to 350 (DWKRQRGEDGR).

It belongs to the transglutaminase-like superfamily. PNGase family. Zn(2+) serves as cofactor.

The protein resides in the cytoplasm. It catalyses the reaction Hydrolysis of an N(4)-(acetyl-beta-D-glucosaminyl)asparagine residue in which the glucosamine residue may be further glycosylated, to yield a (substituted) N-acetyl-beta-D-glucosaminylamine and a peptide containing an aspartate residue.. Its function is as follows. Specifically deglycosylates the denatured form of N-linked glycoproteins in the cytoplasm and assists their proteasome-mediated degradation. Cleaves the beta-aspartyl-glucosamine (GlcNAc) of the glycan and the amide side chain of Asn, converting Asn to Asp. Prefers proteins containing high-mannose over those bearing complex type oligosaccharides. Can recognize misfolded proteins in the endoplasmic reticulum that are exported to the cytosol to be destroyed and deglycosylate them, while it has no activity toward native proteins. Deglycosylation is a prerequisite for subsequent proteasome-mediated degradation of some, but not all, misfolded glycoproteins. This Eremothecium gossypii (strain ATCC 10895 / CBS 109.51 / FGSC 9923 / NRRL Y-1056) (Yeast) protein is Peptide-N(4)-(N-acetyl-beta-glucosaminyl)asparagine amidase (PNG1).